The chain runs to 397 residues: Alpha-lytic protease (397 aa).

The first 24 residues, Met1–Ala24, serve as a signal peptide directing secretion. The propeptide occupies Ala25 to Thr199. Cys216 and Cys236 are oxidised to a cystine. Active-site charge relay system residues include His235 and Asp262. 2 disulfide bridges follow: Cys300–Cys310 and Cys336–Cys369. Ser342 (charge relay system) is an active-site residue.

This sequence belongs to the peptidase S1 family.

It catalyses the reaction Preferential cleavage: Ala-|-Xaa, Val-|-Xaa in bacterial cell walls, elastin and other proteins.. This chain is Alpha-lytic protease (alpha-LP), found in Lysobacter enzymogenes.